Reading from the N-terminus, the 88-residue chain is Large ribosomal subunit protein bL27 (88 aa).

The disordered stretch occupies residues 1 to 26 (MAHKKGASSSSNGRDSEAKRLGVKRF).

This sequence belongs to the bacterial ribosomal protein bL27 family.

In Corynebacterium glutamicum (strain R), this protein is Large ribosomal subunit protein bL27.